Here is a 412-residue protein sequence, read N- to C-terminus: L-cysteine:1D-myo-inositol 2-amino-2-deoxy-alpha-D-glucopyranoside ligase (412 aa).

Cys43 provides a ligand contact to Zn(2+). Residues 43–46 (CGIT), Thr58, and 81–83 (NVT) contribute to the L-cysteinyl-5'-AMP site. Positions 45 to 55 (ITPYDATHLGH) match the 'HIGH' region motif. The short motif at 187–192 (ERGGDP) is the 'ERGGDP' region element. Trp227 contributes to the L-cysteinyl-5'-AMP binding site. A Zn(2+)-binding site is contributed by Cys231. 249–251 (GSD) contacts L-cysteinyl-5'-AMP. Position 256 (His256) interacts with Zn(2+). Ile283 lines the L-cysteinyl-5'-AMP pocket. The 'KMSKS' region signature appears at 289–293 (KMSKS).

It belongs to the class-I aminoacyl-tRNA synthetase family. MshC subfamily. Monomer. It depends on Zn(2+) as a cofactor.

The enzyme catalyses 1D-myo-inositol 2-amino-2-deoxy-alpha-D-glucopyranoside + L-cysteine + ATP = 1D-myo-inositol 2-(L-cysteinylamino)-2-deoxy-alpha-D-glucopyranoside + AMP + diphosphate + H(+). Catalyzes the ATP-dependent condensation of GlcN-Ins and L-cysteine to form L-Cys-GlcN-Ins. The polypeptide is L-cysteine:1D-myo-inositol 2-amino-2-deoxy-alpha-D-glucopyranoside ligase (mshC) (Mycolicibacterium smegmatis (strain ATCC 700084 / mc(2)155) (Mycobacterium smegmatis)).